We begin with the raw amino-acid sequence, 82 residues long: Large ribosomal subunit protein bL27 (82 aa).

Residues 1–20 (MAHKKGASSSRNGRDSNPQY) form a disordered region. The span at 7 to 19 (ASSSRNGRDSNPQ) shows a compositional bias: polar residues.

This sequence belongs to the bacterial ribosomal protein bL27 family.

This is Large ribosomal subunit protein bL27 from Bifidobacterium longum (strain NCC 2705).